Reading from the N-terminus, the 305-residue chain is tRNA pseudouridine synthase B (305 aa).

The active-site Nucleophile is the aspartate 48.

The protein belongs to the pseudouridine synthase TruB family. Type 1 subfamily.

It catalyses the reaction uridine(55) in tRNA = pseudouridine(55) in tRNA. Its function is as follows. Responsible for synthesis of pseudouridine from uracil-55 in the psi GC loop of transfer RNAs. This Mannheimia succiniciproducens (strain KCTC 0769BP / MBEL55E) protein is tRNA pseudouridine synthase B.